The primary structure comprises 999 residues: Cytoplasmic dynein 2 intermediate chain 1 (999 aa).

Basic and acidic residues-rich tracts occupy residues Met-1–Arg-19, Pro-29–Arg-138, Leu-146–His-260, and Gly-268–Glu-300. The disordered stretch occupies residues Met-1–Glu-350. Phosphoserine is present on Ser-250. Residues Leu-318–Ser-338 show a composition bias toward acidic residues. Positions Asn-339–Glu-350 are enriched in basic and acidic residues. Residues Ala-416–Arg-495 form a binding to the DYNLT2B-DYNLT1/DYNLT3 dimer region. 4 WD repeats span residues Ile-637–His-677, Ala-718–Ile-764, Val-850–Gln-890, and Thr-895–Val-935.

It belongs to the dynein light intermediate chain family. Intermediate chain of the cytoplasmic dynein complex 2, a multisubunit complex, composed at least of eleven different proteins. The cytoplasmic dynein 2 complex consists of two catalytic heavy chains (HCs) and a number of non-catalytic subunits presented by intermediate chains (ICs), light intermediate chains (LICs) and light chains (LCs). Among them, a heavy chain (DYNC2H1), two intermediate chains (DYNC2I2 and DYNC2I1), a light intermediate chain (DYNC2LI1), and a light chain (DYNLT2B) are unique to the cytoplasmic dynein complex 2, but a subset of the light chains are also shared by dynein-1 and dynein-2 complexes. Interacts with DYNC2I2; their C-terminal domains each bind a copy of the heavy chain, and their extended N-terminal regions are held together by an array of light chain dimers. Interacts with DYNLT2B. Interacts (via the N-terminal half) with DYNLT2B-DYNLT1 dimer or with DYNLT2B-DYNLT3 dimer; this interaction is crucial for retrograde trafficking of ciliary proteins.

It is found in the cell projection. Its subcellular location is the cilium. It localises to the cytoplasm. The protein localises to the cytoskeleton. The protein resides in the microtubule organizing center. It is found in the centrosome. In terms of biological role, acts as one of several non-catalytic accessory components of the cytoplasmic dynein 2 complex (dynein-2 complex), a motor protein complex that drives the movement of cargos along microtubules within cilia and flagella in concert with the intraflagellar transport (IFT) system. DYNC2I1 plays a major role in retrograde ciliary protein trafficking in cilia and flagella. Also requires to maintain a functional transition zone. In Mus musculus (Mouse), this protein is Cytoplasmic dynein 2 intermediate chain 1 (Dync2i1).